Here is a 204-residue protein sequence, read N- to C-terminus: Redox-sensing transcriptional repressor Rex 2 (204 aa).

Residues 17-53 (MYRKVLEATKKPYISSDEIARFLEINPDLVRKDFSYL) constitute a DNA-binding region (H-T-H motif).

This sequence belongs to the transcriptional regulatory Rex family. In terms of assembly, homodimer.

It is found in the cytoplasm. Its function is as follows. Modulates transcription in response to changes in cellular NADH/NAD(+) redox state. This chain is Redox-sensing transcriptional repressor Rex 2 (rex2), found in Thermotoga maritima (strain ATCC 43589 / DSM 3109 / JCM 10099 / NBRC 100826 / MSB8).